The primary structure comprises 274 residues: Type II restriction enzyme HgiEI (274 aa).

The protein belongs to the TdeIII type II restriction endonuclease family.

It catalyses the reaction Endonucleolytic cleavage of DNA to give specific double-stranded fragments with terminal 5'-phosphates.. A P subtype restriction enzyme that recognizes the double-stranded sequence 5'-GGWCC-3' and cleaves after G-1. This system is more active than isoschizomeric RM.HgiBI. The sequence is that of Type II restriction enzyme HgiEI from Herpetosiphon aurantiacus (Herpetosiphon giganteus).